A 487-amino-acid polypeptide reads, in one-letter code: Probable Xaa-Pro aminopeptidase MGYG_06974 (487 aa).

Residues aspartate 255, aspartate 266, glutamate 414, and glutamate 458 each contribute to the Mn(2+) site.

It belongs to the peptidase M24B family. Mn(2+) serves as cofactor.

The enzyme catalyses Release of any N-terminal amino acid, including proline, that is linked to proline, even from a dipeptide or tripeptide.. Its function is as follows. Catalyzes the removal of a penultimate prolyl residue from the N-termini of peptides. The chain is Probable Xaa-Pro aminopeptidase MGYG_06974 from Arthroderma gypseum (strain ATCC MYA-4604 / CBS 118893) (Microsporum gypseum).